The primary structure comprises 967 residues: Aminopeptidase N (967 aa).

The Cytoplasmic portion of the chain corresponds to 1 to 8 (MAKGFYIS). The chain crosses the membrane as a helical; Signal-anchor for type II membrane protein span at residues 9 to 32 (KPVGILAILLGVAAVCTIIALSVV). Residues 33 to 66 (YSQEKNRSTESSTAASTAAPTGPTTTVATTLDQS) are cytosolic Ser/Thr-rich junction. The Extracellular portion of the chain corresponds to 33 to 967 (YSQEKNRSTE…VVLRWFTENS (935 aa)). Residue asparagine 38 is glycosylated (N-linked (GlcNAc...) asparagine). Residues 41–61 (TESSTAASTAAPTGPTTTVAT) are disordered. Positions 67-967 (KPWNVYRLPK…VVLRWFTENS (901 aa)) are metalloprotease. 2 N-linked (GlcNAc...) asparagine glycosylation sites follow: asparagine 84 and asparagine 126. Tyrosine 175 is subject to Sulfotyrosine. Asparagine 233 and asparagine 338 each carry an N-linked (GlcNAc...) asparagine glycan. Residue 351-355 (GAMEN) coordinates substrate. Histidine 387 lines the Zn(2+) pocket. Residue glutamate 388 is the Proton acceptor of the active site. Zn(2+) contacts are provided by histidine 391 and glutamate 410. Tyrosine 418 bears the Sulfotyrosine mark. Asparagine 626, asparagine 682, and asparagine 740 each carry an N-linked (GlcNAc...) asparagine glycan. The tract at residues 670–840 (ASAQKVPVTL…GALACSNQVW (171 aa)) is interaction with FCoV and TGEV spike glycoprotein. 2 cysteine pairs are disulfide-bonded: cysteine 762–cysteine 769 and cysteine 799–cysteine 835.

The protein belongs to the peptidase M1 family. In terms of assembly, homodimer. Interacts with SLC6A19. As to quaternary structure, (Microbial infection) Interacts with FCoV, CCoV, TGEV and HCoV-229E spike glycoprotein. Zn(2+) is required as a cofactor. In terms of processing, sulfated. Post-translationally, N- and O-glycosylated. May undergo proteolysis and give rise to a soluble form.

It is found in the cell membrane. The catalysed reaction is Release of an N-terminal amino acid, Xaa-|-Yaa- from a peptide, amide or arylamide. Xaa is preferably Ala, but may be most amino acids including Pro (slow action). When a terminal hydrophobic residue is followed by a prolyl residue, the two may be released as an intact Xaa-Pro dipeptide.. Its function is as follows. Broad specificity aminopeptidase which plays a role in the final digestion of peptides generated from hydrolysis of proteins by gastric and pancreatic proteases. Also involved in the processing of various peptides including peptide hormones, such as angiotensin III and IV, neuropeptides, and chemokines. May also be involved the cleavage of peptides bound to major histocompatibility complex class II molecules of antigen presenting cells. May have a role in angiogenesis and promote cholesterol crystallization. May have a role in amino acid transport by acting as binding partner of amino acid transporter SLC6A19 and regulating its activity. Functionally, (Microbial infection) In case of feline coronavirus (FCoV) infection, serves as a receptor for FCoV spike glycoprotein. It is as well a receptor for other serogroup I coronaviruses, like canine coronavirus (CCoV), porcine transmissible gastroenteritis virus (TGEV), and human coronavirus 229E (HCoV-229E). Also serves as a receptor for infectious bronchitis virus (IBV, Arkansas 99 serotype) in serogroup III. This Felis catus (Cat) protein is Aminopeptidase N (ANPEP).